The sequence spans 293 residues: 4-diphosphocytidyl-2-C-methyl-D-erythritol kinase (293 aa).

Lys-16 is an active-site residue. 99-109 (PMGAGLGGGSS) is an ATP binding site. Asp-141 is an active-site residue.

It belongs to the GHMP kinase family. IspE subfamily.

The catalysed reaction is 4-CDP-2-C-methyl-D-erythritol + ATP = 4-CDP-2-C-methyl-D-erythritol 2-phosphate + ADP + H(+). The protein operates within isoprenoid biosynthesis; isopentenyl diphosphate biosynthesis via DXP pathway; isopentenyl diphosphate from 1-deoxy-D-xylulose 5-phosphate: step 3/6. Its function is as follows. Catalyzes the phosphorylation of the position 2 hydroxy group of 4-diphosphocytidyl-2C-methyl-D-erythritol. In Burkholderia cenocepacia (strain ATCC BAA-245 / DSM 16553 / LMG 16656 / NCTC 13227 / J2315 / CF5610) (Burkholderia cepacia (strain J2315)), this protein is 4-diphosphocytidyl-2-C-methyl-D-erythritol kinase.